A 372-amino-acid polypeptide reads, in one-letter code: Probable dual-specificity RNA methyltransferase RlmN (372 aa).

The tract at residues Met-1–Met-20 is disordered. The active-site Proton acceptor is the Glu-112. The Radical SAM core domain occupies Tyr-118–Arg-357. Residues Cys-125 and Cys-363 are joined by a disulfide bond. Residues Cys-132, Cys-136, and Cys-139 each contribute to the [4Fe-4S] cluster site. S-adenosyl-L-methionine is bound by residues Gly-187 to Glu-188, Ser-221, Ser-244 to His-246, and Asn-320. Cys-363 (S-methylcysteine intermediate) is an active-site residue.

It belongs to the radical SAM superfamily. RlmN family. [4Fe-4S] cluster serves as cofactor.

The protein resides in the cytoplasm. The catalysed reaction is adenosine(2503) in 23S rRNA + 2 reduced [2Fe-2S]-[ferredoxin] + 2 S-adenosyl-L-methionine = 2-methyladenosine(2503) in 23S rRNA + 5'-deoxyadenosine + L-methionine + 2 oxidized [2Fe-2S]-[ferredoxin] + S-adenosyl-L-homocysteine. It carries out the reaction adenosine(37) in tRNA + 2 reduced [2Fe-2S]-[ferredoxin] + 2 S-adenosyl-L-methionine = 2-methyladenosine(37) in tRNA + 5'-deoxyadenosine + L-methionine + 2 oxidized [2Fe-2S]-[ferredoxin] + S-adenosyl-L-homocysteine. Specifically methylates position 2 of adenine 2503 in 23S rRNA and position 2 of adenine 37 in tRNAs. The sequence is that of Probable dual-specificity RNA methyltransferase RlmN from Salinispora tropica (strain ATCC BAA-916 / DSM 44818 / JCM 13857 / NBRC 105044 / CNB-440).